A 160-amino-acid polypeptide reads, in one-letter code: Transcription antitermination protein NusB (160 aa).

Belongs to the NusB family.

In terms of biological role, involved in transcription antitermination. Required for transcription of ribosomal RNA (rRNA) genes. Binds specifically to the boxA antiterminator sequence of the ribosomal RNA (rrn) operons. This is Transcription antitermination protein NusB from Rhizobium rhizogenes (strain K84 / ATCC BAA-868) (Agrobacterium radiobacter).